Consider the following 103-residue polypeptide: 11.2 kDa protein (103 aa).

The chain is 11.2 kDa protein from Pseudomonas phage Pf1 (Bacteriophage Pf1).